A 671-amino-acid polypeptide reads, in one-letter code: Palmitoleoyl-protein carboxylesterase NOTUM (671 aa).

Residues Met1–Ser46 form the signal peptide. A glycan (N-linked (GlcNAc...) asparagine) is linked at Asn95. Catalysis depends on charge relay system residues Ser237 and Asp338. A glycan (N-linked (GlcNAc...) asparagine) is linked at Asn372. The active-site Charge relay system is His384. The disordered stretch occupies residues His411–Pro592. The segment covering Asn439–His454 has biased composition (basic residues). Residues Leu470–Arg486 show a composition bias toward basic and acidic residues. The segment covering Gln487–Gln497 has biased composition (basic residues). The span at Gln505 to Ser514 shows a compositional bias: basic and acidic residues. Residues Pro570 to Thr583 show a composition bias toward polar residues. Residues Asn578 and Asn612 are each glycosylated (N-linked (GlcNAc...) asparagine).

It belongs to the pectinacetylesterase family. Notum subfamily.

The protein resides in the secreted. It localises to the cell surface. It carries out the reaction [Wnt protein]-O-(9Z)-hexadecenoyl-L-serine + H2O = [Wnt protein]-L-serine + (9Z)-hexadecenoate + H(+). In terms of biological role, carboxylesterase that acts as a key negative regulator of the Wnt signaling pathway by specifically mediating depalmitoleoylation of WNT proteins. Serine palmitoleoylation of WNT proteins is required for efficient binding to frizzled receptors. Also acts as a regulator of long-range activity of Hedgehog (hh), possibly by regulating the switch between low and high level hh pathway signaling. This chain is Palmitoleoyl-protein carboxylesterase NOTUM, found in Drosophila melanogaster (Fruit fly).